Here is a 107-residue protein sequence, read N- to C-terminus: Putative double-stranded DNA mimic protein ETA_15890 (107 aa).

The protein belongs to the putative dsDNA mimic protein family.

Its function is as follows. May act as a double-stranded DNA (dsDNA) mimic. Probably regulates the activity of a dsDNA-binding protein. The polypeptide is Putative double-stranded DNA mimic protein ETA_15890 (Erwinia tasmaniensis (strain DSM 17950 / CFBP 7177 / CIP 109463 / NCPPB 4357 / Et1/99)).